The following is an 85-amino-acid chain: UPF0386 protein Plav_1374 (85 aa).

This sequence belongs to the UPF0386 family.

In Parvibaculum lavamentivorans (strain DS-1 / DSM 13023 / NCIMB 13966), this protein is UPF0386 protein Plav_1374.